A 346-amino-acid chain; its full sequence is Inositol 2-dehydrogenase (346 aa).

It belongs to the Gfo/Idh/MocA family. As to quaternary structure, homotetramer.

The catalysed reaction is myo-inositol + NAD(+) = scyllo-inosose + NADH + H(+). Functionally, involved in the oxidation of myo-inositol (MI) to 2-keto-myo-inositol (2KMI or 2-inosose). The protein is Inositol 2-dehydrogenase of Rhodococcus erythropolis (strain PR4 / NBRC 100887).